The following is a 129-amino-acid chain: Glycerol-3-phosphate cytidylyltransferase (129 aa).

Residues 9-10 and 14-17 contribute to the CTP site; these read TF and HYGH. K44 is a binding site for substrate. Residue K46 participates in CTP binding. A substrate-binding site is contributed by K77. 113 to 120 is a CTP binding site; it reads RTDGISTT.

It belongs to the cytidylyltransferase family. Homodimer.

It is found in the cytoplasm. It carries out the reaction sn-glycerol 3-phosphate + CTP + H(+) = CDP-glycerol + diphosphate. It participates in cell wall biogenesis; poly(ribitol phosphate) teichoic acid biosynthesis. Functionally, catalyzes the transfer of the cytidylyl group of CTP to sn-glycerol 3-phosphate so the activated glycerol 3-phosphate can be used for teichoic acid synthesis, via incorporation into both the linkage unit by TarB and TarF. This is Glycerol-3-phosphate cytidylyltransferase (tarD) from Bacillus spizizenii (strain ATCC 23059 / NRRL B-14472 / W23) (Bacillus subtilis subsp. spizizenii).